The sequence spans 976 residues: Receptor-like protein 14 (976 aa).

Positions 1-26 (MERKVFSGQNLIWVMLLLVQLRGYKC) are cleaved as a signal peptide. Residues 27–928 (CIEKERKALL…DDDDEAAIDM (902 aa)) are Extracellular-facing. N-linked (GlcNAc...) asparagine glycans are attached at residues N60, N75, N98, N112, N151, N185, and N200. LRR repeat units lie at residues 105 to 127 (FEEL…LFDD), 137 to 160 (LRNL…FLNA), 162 to 185 (TSLT…ELKN), 186 to 209 (LTKL…FTHL), 210 to 233 (EKLK…ELKV), 234 to 258 (LTNL…VFCE), 260 to 283 (KNLR…LGNL), 284 to 306 (NKLR…SFNS), 308 to 331 (ESLE…PLAN), 333 to 358 (TKLK…WLPK), 359 to 381 (FQLT…LVYQ), 382 to 405 (TNLR…LLEN), 407 to 428 (PELK…PTIV), 429 to 452 (HKLQ…IGHV), 454 to 477 (PRLL…MGEM), 478 to 501 (NDIS…LLTG), and 503 to 528 (FSLI…RLTS). The N-linked (GlcNAc...) asparagine glycan is linked to N331. An N-linked (GlcNAc...) asparagine glycan is attached at N416. Residues N460 and N489 are each glycosylated (N-linked (GlcNAc...) asparagine). The stretch at 530-549 (IVLRMHNNLFTGEIGVGLRT) is one LRR 18; degenerate repeat. LRR repeat units lie at residues 550–573 (LVNL…SIPP), 575–599 (SSHL…LLAI), 600–623 (HHLN…VVNS), 625–645 (YGIK…VTLL), 646–669 (ENAY…VNTG), 671–692 (MITL…LCDL), 693–715 (TSIR…CLNH), 782–805 (LDYM…ELGD), 806–829 (LSKL…NFSK), 831–854 (KDIE…LTNL), and 856–879 (SLAV…QFNT). N552 is a glycosylation site (N-linked (GlcNAc...) asparagine). N-linked (GlcNAc...) asparagine glycosylation occurs at N633. N-linked (GlcNAc...) asparagine glycosylation occurs at N680. Residues N813, N826, N853, N861, and N866 are each glycosylated (N-linked (GlcNAc...) asparagine). Residues 897–922 (DRSCEGKKNTKEADNGGEEEEEDDDD) are disordered. Residues 898-910 (RSCEGKKNTKEAD) are compositionally biased toward basic and acidic residues. Residues 911 to 922 (NGGEEEEEDDDD) show a composition bias toward acidic residues. The chain crosses the membrane as a helical span at residues 929–949 (VVLYWTTGSTYAIALIGILVL). At 950 to 976 (MCFDCPWRRTWLCIVDAFIASGKSMFS) the chain is on the cytoplasmic side.

Belongs to the RLP family.

It is found in the cell membrane. This is Receptor-like protein 14 from Arabidopsis thaliana (Mouse-ear cress).